The following is a 329-amino-acid chain: Sideroflexin (329 aa).

5 helical membrane passes run 95–115 (AFLPINVIICAGLILPNASIG), 147–167 (ILEAYASAVGISCSLAVGLGW), 183–203 (LRMMVPFTAVTSAGIANVLIM), 238–258 (FSRAATSFPALLLPPIVMGLF), and 274–294 (LNLAVIAAIFNTSLPAAIALF).

This sequence belongs to the sideroflexin family.

The protein localises to the mitochondrion membrane. Functionally, mitochondrial amino-acid transporter that mediates transport of serine into mitochondria. This Dictyostelium discoideum (Social amoeba) protein is Sideroflexin.